Here is a 449-residue protein sequence, read N- to C-terminus: 23S rRNA (uracil(1939)-C(5))-methyltransferase RlmD (449 aa).

Residues 1–66 (MGRSRYHNKL…AKFDEAKVVE (66 aa)) enclose the TRAM domain. Positions 79, 85, 88, and 169 each coordinate [4Fe-4S] cluster. Positions 280, 309, 314, 330, 357, and 379 each coordinate S-adenosyl-L-methionine. C405 (nucleophile) is an active-site residue.

It belongs to the class I-like SAM-binding methyltransferase superfamily. RNA M5U methyltransferase family. RlmD subfamily.

It carries out the reaction uridine(1939) in 23S rRNA + S-adenosyl-L-methionine = 5-methyluridine(1939) in 23S rRNA + S-adenosyl-L-homocysteine + H(+). Functionally, catalyzes the formation of 5-methyl-uridine at position 1939 (m5U1939) in 23S rRNA. This chain is 23S rRNA (uracil(1939)-C(5))-methyltransferase RlmD, found in Francisella tularensis subsp. holarctica (strain LVS).